We begin with the raw amino-acid sequence, 228 residues long: Immunogenic protein MPB64 (228 aa).

Residues 1–23 form the signal peptide; that stretch reads MRIKIFMLVTAVVLLCCSGVATA.

Belongs to the RsiV family.

The protein localises to the secreted. The protein is Immunogenic protein MPB64 (mpb64) of Mycobacterium bovis (strain ATCC BAA-935 / AF2122/97).